The chain runs to 374 residues: MAQPMLIDLEELVERLDRIGVRLCLPSKRQQIEQLEHEAADPDLWQDPQRAQSLLRRLSQLRDLVQEWETLSQQARDLLELRALASDDLELAGQVEQEATELAERVRQLELRLLLTGQYDGHDAILAVHAGTGGVDAQDWAEMLLRMYLRWAQRAGFAAEVVDLLEGEEAGIKSATVEVRGPYAYGYLKGEAGTHRLVRLSPFDAAHRRHTSFALVEVLPLVEEDDDVEIREEDIRIDTFRASGHGGQHVNKTESAVRITHLPTGIVVTCQNERSQIQNRETAMKILKARLLELKIRQRQEEQARLKGKPVVTGWGNRIRSYVLHPYTMVTDHRTEVSTPNIQAVLEGEIDPFIEAYLHQQAAEGEETAAASDR.

Q248 bears the N5-methylglutamine mark.

The protein belongs to the prokaryotic/mitochondrial release factor family. Post-translationally, methylated by PrmC. Methylation increases the termination efficiency of RF2.

The protein localises to the cytoplasm. Its function is as follows. Peptide chain release factor 2 directs the termination of translation in response to the peptide chain termination codons UGA and UAA. The sequence is that of Peptide chain release factor 2 from Thermomicrobium roseum (strain ATCC 27502 / DSM 5159 / P-2).